The sequence spans 445 residues: RNA-binding protein asd-2 (445 aa).

The segment at 22–63 (TVIPPPPNDSGHEFIGPSSGPPQVTITPSGVQSGSANGVSTS) is disordered. The span at 42 to 63 (PPQVTITPSGVQSGSANGVSTS) shows a compositional bias: polar residues. The qua1 domain stretch occupies residues 71–128 (EYLSQLLKDKKQLAAFPNVFHHLERLADEEINKVRVVLFQCEFSKESAPLPDAEGDST). The region spanning 145–171 (NFVGRILGPRGMTAKQLEQETGCKIMV) is the KH domain. A qua2 domain; involved in RNA binding region spans residues 230-253 (APEGEDDLKRKQLMELAIINGTYR).

In terms of assembly, interacts with sup-12; in the presence of RNA, but with weak affinity in the absence of RNA. Isoform b: Expressed in the hypodermis and pharyngeal muscles. Isoform c: Expressed in body wall muscles and phayngeal muscles.

Its subcellular location is the nucleus. Its function is as follows. RNA-binding protein that binds to the 5'-NACUAAY-N(1,20)-UAAY-3' consensus sequence in pre-mRNA introns to promote alternative splicing. Required for mutually exclusive alternative splicing where it modulates the switch between mutually exclusive exons during pre-mRNA maturation. Involved in muscle-specific gene expression regulating the alternative splicing of genes such as let-2 and unc-60 to ensure that their respective isoforms are expressed in muscle. Promotes the removal of intron 10 from let-2 pre-mRNA to allow for the exclusive expression of the muscle-specific let-2 isoform (as opposed to the non-muscle-specific isoform expressed in embryos) in body wall muscles during late larval and adult stages of development. Binds cooperatively with RNA-binding protein sup-12 to intron 1A of the unc-60 pre-mRNA to promote alternative splicing and expression of the muscle specific isoform of unc-60. The chain is RNA-binding protein asd-2 from Caenorhabditis elegans.